The following is a 307-amino-acid chain: Elongation factor Ts (307 aa).

The interval 82–85 (TDFV) is involved in Mg(2+) ion dislocation from EF-Tu.

This sequence belongs to the EF-Ts family.

The protein resides in the cytoplasm. Its function is as follows. Associates with the EF-Tu.GDP complex and induces the exchange of GDP to GTP. It remains bound to the aminoacyl-tRNA.EF-Tu.GTP complex up to the GTP hydrolysis stage on the ribosome. The polypeptide is Elongation factor Ts (Nautilia profundicola (strain ATCC BAA-1463 / DSM 18972 / AmH)).